A 155-amino-acid chain; its full sequence is Ribosomal RNA large subunit methyltransferase H (155 aa).

S-adenosyl-L-methionine is bound by residues L73, G104, and 123-128; that span reads LSPLTL.

The protein belongs to the RNA methyltransferase RlmH family. Homodimer.

It is found in the cytoplasm. It catalyses the reaction pseudouridine(1915) in 23S rRNA + S-adenosyl-L-methionine = N(3)-methylpseudouridine(1915) in 23S rRNA + S-adenosyl-L-homocysteine + H(+). Specifically methylates the pseudouridine at position 1915 (m3Psi1915) in 23S rRNA. This is Ribosomal RNA large subunit methyltransferase H from Ectopseudomonas mendocina (strain ymp) (Pseudomonas mendocina).